Consider the following 186-residue polypeptide: MSSRLLLQLLGFWLFLSQPCRARVSEEWMDQVIQVCGRGYARAWIEVCGASVGRLALSQEEPAPLARQATAEVVPSFINKDAEPFDMTLKCLPNLSEERKAALSEGRAPFPELQQHAPALSDSVVSLEGFKKTFHNQLGEAEDGGPPELKYLGSDAQSRKKRQSGALLSEQCCHIGCTRRSIAKLC.

An N-terminal signal peptide occupies residues 1-22 (MSSRLLLQLLGFWLFLSQPCRA). Disulfide bonds link Cys-36-Cys-173, Cys-48-Cys-186, and Cys-172-Cys-177. Residues 58–158 (SQEEPAPLAR…LKYLGSDAQS (101 aa)) constitute a propeptide, connecting peptide. Gln-163 bears the Pyrrolidone carboxylic acid mark.

This sequence belongs to the insulin family. As to quaternary structure, heterodimer of a B chain and an A chain linked by two disulfide bonds.

The protein resides in the secreted. In terms of biological role, relaxin is an ovarian hormone that acts with estrogen to produce dilatation of the birth canal in many mammals. This Rattus norvegicus (Rat) protein is Prorelaxin 1 (Rln1).